The chain runs to 466 residues: uncharacterized protein (466 aa).

Residues 4–199 enclose the C2 NT-type domain; that stretch reads NHNSKAKRPK…IINVSLQLKL (196 aa). Disordered regions lie at residues 262–298, 374–393, and 400–452; these read AKPG…STTI, LGNK…YSTM, and EKKQ…LTDR. Over residues 266–298 the composition is skewed to polar residues; the sequence is TNATGNSTSIKSPTSTNHKSSEMTTKPGLSTTI. Serine 433 and serine 439 each carry phosphoserine.

This sequence to S.pombe SpCC1494.08c.

This is an uncharacterized protein from Saccharomyces cerevisiae (strain ATCC 204508 / S288c) (Baker's yeast).